The sequence spans 102 residues: Large ribosomal subunit protein bL21 (102 aa).

This sequence belongs to the bacterial ribosomal protein bL21 family. Part of the 50S ribosomal subunit. Contacts protein L20.

Its function is as follows. This protein binds to 23S rRNA in the presence of protein L20. This is Large ribosomal subunit protein bL21 from Azorhizobium caulinodans (strain ATCC 43989 / DSM 5975 / JCM 20966 / LMG 6465 / NBRC 14845 / NCIMB 13405 / ORS 571).